The sequence spans 263 residues: MNTGFTAIIADDEPLLRHHLDKSLAEVWPELDIVAKVADGEQALLAIEQSQPDIAFLDIRMPVLDGMSLAQKLNRLANPPLIVFVTAYDDYAIKAFEQNAADYLLKPISDARLQTTCERVKARLSQRGSDNSHVQMNSLLEQLQQLSAPQTPQYLQWIKATQGDDIHLIATSDVLYFKAEEKYVSVYAQQGKGEVQEYLIRTSLKELIGQLNPEQFWQVHRSSVVQVSKISKVNKDFAGRMFVYVGETKLPVSRASQSLFKGM.

The 116-residue stretch at 6 to 121 (TAIIADDEPL…RLQTTCERVK (116 aa)) folds into the Response regulatory domain. 4-aspartylphosphate is present on Asp58. The region spanning 158 to 263 (IKATQGDDIH…RASQSLFKGM (106 aa)) is the HTH LytTR-type domain.

This is an uncharacterized protein from Vibrio parahaemolyticus serotype O3:K6 (strain RIMD 2210633).